The following is a 243-amino-acid chain: Biosynthetic peptidoglycan transglycosylase (243 aa).

The chain crosses the membrane as a helical span at residues 22-42 (LIVLLVLALMSVLQVIVFRFV).

This sequence belongs to the glycosyltransferase 51 family.

The protein resides in the cell inner membrane. It catalyses the reaction [GlcNAc-(1-&gt;4)-Mur2Ac(oyl-L-Ala-gamma-D-Glu-L-Lys-D-Ala-D-Ala)](n)-di-trans,octa-cis-undecaprenyl diphosphate + beta-D-GlcNAc-(1-&gt;4)-Mur2Ac(oyl-L-Ala-gamma-D-Glu-L-Lys-D-Ala-D-Ala)-di-trans,octa-cis-undecaprenyl diphosphate = [GlcNAc-(1-&gt;4)-Mur2Ac(oyl-L-Ala-gamma-D-Glu-L-Lys-D-Ala-D-Ala)](n+1)-di-trans,octa-cis-undecaprenyl diphosphate + di-trans,octa-cis-undecaprenyl diphosphate + H(+). The protein operates within cell wall biogenesis; peptidoglycan biosynthesis. Its function is as follows. Peptidoglycan polymerase that catalyzes glycan chain elongation from lipid-linked precursors. In Xylella fastidiosa (strain 9a5c), this protein is Biosynthetic peptidoglycan transglycosylase.